The following is a 103-amino-acid chain: Small ribosomal subunit protein uS10 (103 aa).

Belongs to the universal ribosomal protein uS10 family. In terms of assembly, part of the 30S ribosomal subunit.

In terms of biological role, involved in the binding of tRNA to the ribosomes. The polypeptide is Small ribosomal subunit protein uS10 (Dechloromonas aromatica (strain RCB)).